We begin with the raw amino-acid sequence, 747 residues long: Flowering time control protein FCA (747 aa).

The segment at 80 to 101 (YSVRPTTPPVQQPLSGQKRGYP) is disordered. 2 RRM domains span residues 120-201 (VKLF…YADG) and 211-291 (FKLF…FAEP). Positions 291–301 (PKRPKPGESRE) are enriched in basic and acidic residues. Positions 291 to 503 (PKRPKPGESR…QQPLQKMQHP (213 aa)) are disordered. 2 stretches are compositionally biased toward polar residues: residues 320–353 (RPTS…SNTG) and 395–406 (SSSATLQQQNRA). Residues 448–460 (SSQLPTSQLPPQQ) show a composition bias toward low complexity. The span at 461-498 (NISRATAPQTPLNINLRPTTVSSATVQFPPRSQQQPLQ) shows a compositional bias: polar residues. Residues 591 to 624 (GSVKCTWTEHTSPDGFKYYYNGLTGESKWEKPEE) enclose the WW domain. Positions 630–641 (REQQKQQQHQEK) are enriched in basic and acidic residues. Disordered regions lie at residues 630-707 (REQQ…SGIG) and 722-747 (AASM…KNKA). A compositionally biased stretch (low complexity) spans 642 to 673 (PTIQQSQTQLQPLQQQPQQVQQQYQGQQLQQP). Polar residues-rich tracts occupy residues 674–707 (FYSS…SGIG) and 726–739 (NDIS…QSPQ).

Interacts (via C-terminus) with SWI3B and (via WW domain) with FY (via PPLPP motifs). In terms of tissue distribution, constitutively expressed, but the negative feedback maintains the active isoform a low level throughout much of the plant, except in meristematic cells at a specific time in development.

Its subcellular location is the nucleus. Its function is as follows. Plays a major role in the promotion of the transition of the vegetative meristem to reproductive development. Plays a role in the regulation of flowering time in the autonomous flowering pathway by decreasing FLOWERING LOCUS C mRNA levels. Required for RNA-mediated chromatin silencing of a range of loci in the genome. Cotranscriptionally recognizes aberrant RNA and marks it for silencing. Controls alternative cleavage and polyadenylation on pre-mRNAs and antisense RNAs. Acts redundantly with FPA to prevent the expression of distally polyadenylated antisense RNAs at the FLC locus. This chain is Flowering time control protein FCA (FCA), found in Arabidopsis thaliana (Mouse-ear cress).